We begin with the raw amino-acid sequence, 396 residues long: Purple acid phosphatase 5 (396 aa).

The first 13 residues, 1 to 13, serve as a signal peptide directing secretion; the sequence is MSLETFPPPAGYN. Asn58 is a glycosylation site (N-linked (GlcNAc...) asparagine). Asp125 serves as a coordination point for Fe cation. Asn133 carries N-linked (GlcNAc...) asparagine glycosylation. The Fe cation site is built by Asp153 and Tyr156. Asp153 is a binding site for Zn(2+). Asn190 contributes to the Zn(2+) binding site. Asn190 serves as a coordination point for substrate. N-linked (GlcNAc...) asparagine glycosylation occurs at Asn238. His250 is a binding site for Zn(2+). Catalysis depends on His260, which acts as the Proton donor. His287 is a Zn(2+) binding site. A substrate-binding site is contributed by 287-289; it reads HVH. Fe cation is bound at residue His289. 2 N-linked (GlcNAc...) asparagine glycosylation sites follow: Asn303 and Asn360.

This sequence belongs to the metallophosphoesterase superfamily. Purple acid phosphatase family. Homodimer. Requires Fe cation as cofactor. It depends on Zn(2+) as a cofactor.

It is found in the secreted. The catalysed reaction is a phosphate monoester + H2O = an alcohol + phosphate. This chain is Purple acid phosphatase 5 (PAP5), found in Arabidopsis thaliana (Mouse-ear cress).